Here is a 423-residue protein sequence, read N- to C-terminus: Deoxyguanosinetriphosphate triphosphohydrolase-like protein (423 aa).

Residues 66-216 (RLTHSLEVAQ…MDFSDDIAYS (151 aa)) form the HD domain.

It belongs to the dGTPase family. Type 2 subfamily.

The polypeptide is Deoxyguanosinetriphosphate triphosphohydrolase-like protein (Corynebacterium diphtheriae (strain ATCC 700971 / NCTC 13129 / Biotype gravis)).